The following is a 150-amino-acid chain: D-aminoacyl-tRNA deacylase (150 aa).

The short motif at Gly138 to Pro139 is the Gly-cisPro motif, important for rejection of L-amino acids element.

The protein belongs to the DTD family. In terms of assembly, homodimer.

It is found in the cytoplasm. The enzyme catalyses glycyl-tRNA(Ala) + H2O = tRNA(Ala) + glycine + H(+). It catalyses the reaction a D-aminoacyl-tRNA + H2O = a tRNA + a D-alpha-amino acid + H(+). Functionally, an aminoacyl-tRNA editing enzyme that deacylates mischarged D-aminoacyl-tRNAs. Also deacylates mischarged glycyl-tRNA(Ala), protecting cells against glycine mischarging by AlaRS. Acts via tRNA-based rather than protein-based catalysis; rejects L-amino acids rather than detecting D-amino acids in the active site. By recycling D-aminoacyl-tRNA to D-amino acids and free tRNA molecules, this enzyme counteracts the toxicity associated with the formation of D-aminoacyl-tRNA entities in vivo and helps enforce protein L-homochirality. This chain is D-aminoacyl-tRNA deacylase, found in Phocaeicola vulgatus (strain ATCC 8482 / DSM 1447 / JCM 5826 / CCUG 4940 / NBRC 14291 / NCTC 11154) (Bacteroides vulgatus).